Here is a 368-residue protein sequence, read N- to C-terminus: Phospho-N-acetylmuramoyl-pentapeptide-transferase (368 aa).

A run of 9 helical transmembrane segments spans residues 2–22 (IALI…TPLL), 51–71 (TLGG…SALY), 80–100 (PSWS…LGFI), 117–137 (GGKF…ALLI), 167–187 (VAII…TNAV), 193–213 (LDGL…IIAF), 234–254 (PLDL…FLWY), 271–291 (LGGL…AVVL), and 340–360 (FWMI…GDWV).

It belongs to the glycosyltransferase 4 family. MraY subfamily. The cofactor is Mg(2+).

Its subcellular location is the cell membrane. It carries out the reaction UDP-N-acetyl-alpha-D-muramoyl-L-alanyl-gamma-D-glutamyl-meso-2,6-diaminopimeloyl-D-alanyl-D-alanine + di-trans,octa-cis-undecaprenyl phosphate = di-trans,octa-cis-undecaprenyl diphospho-N-acetyl-alpha-D-muramoyl-L-alanyl-D-glutamyl-meso-2,6-diaminopimeloyl-D-alanyl-D-alanine + UMP. It participates in cell wall biogenesis; peptidoglycan biosynthesis. Its function is as follows. Catalyzes the initial step of the lipid cycle reactions in the biosynthesis of the cell wall peptidoglycan: transfers peptidoglycan precursor phospho-MurNAc-pentapeptide from UDP-MurNAc-pentapeptide onto the lipid carrier undecaprenyl phosphate, yielding undecaprenyl-pyrophosphoryl-MurNAc-pentapeptide, known as lipid I. This is Phospho-N-acetylmuramoyl-pentapeptide-transferase from Bifidobacterium longum (strain DJO10A).